We begin with the raw amino-acid sequence, 525 residues long: GMP synthase [glutamine-hydrolyzing] (525 aa).

Residues 9 to 207 (RILILDFGSQ…VMDICKCEKL (199 aa)) enclose the Glutamine amidotransferase type-1 domain. Residue Cys-86 is the Nucleophile of the active site. Catalysis depends on residues His-181 and Glu-183. The GMPS ATP-PPase domain occupies 208–400 (WTAGAIIEDA…LGLPYDMLYR (193 aa)). 235–241 (SGGVDSS) contacts ATP.

In terms of assembly, homodimer.

The enzyme catalyses XMP + L-glutamine + ATP + H2O = GMP + L-glutamate + AMP + diphosphate + 2 H(+). Its pathway is purine metabolism; GMP biosynthesis; GMP from XMP (L-Gln route): step 1/1. Functionally, catalyzes the synthesis of GMP from XMP. The polypeptide is GMP synthase [glutamine-hydrolyzing] (Alteromonas mediterranea (strain DSM 17117 / CIP 110805 / LMG 28347 / Deep ecotype)).